The chain runs to 526 residues: Peptide chain release factor 3 (526 aa).

Residues 9-277 (DKRRTFAIIS…GIVEWAPKPL (269 aa)) form the tr-type G domain. GTP contacts are provided by residues 18-25 (SHPDAGKT), 86-90 (DTPGH), and 140-143 (NKLD).

This sequence belongs to the TRAFAC class translation factor GTPase superfamily. Classic translation factor GTPase family. PrfC subfamily.

It localises to the cytoplasm. Its function is as follows. Increases the formation of ribosomal termination complexes and stimulates activities of RF-1 and RF-2. It binds guanine nucleotides and has strong preference for UGA stop codons. It may interact directly with the ribosome. The stimulation of RF-1 and RF-2 is significantly reduced by GTP and GDP, but not by GMP. In Shewanella sp. (strain MR-4), this protein is Peptide chain release factor 3.